An 89-amino-acid polypeptide reads, in one-letter code: UPF0223 protein Bcer98_2663 (89 aa).

This sequence belongs to the UPF0223 family.

This is UPF0223 protein Bcer98_2663 from Bacillus cytotoxicus (strain DSM 22905 / CIP 110041 / 391-98 / NVH 391-98).